Reading from the N-terminus, the 84-residue chain is U4-theraphotoxin-Hhn1a (84 aa).

Residues 1 to 22 form the signal peptide; it reads MKVTLIAILTCAAVLVLHTTAA. Residues 23 to 47 constitute a propeptide that is removed on maturation; that stretch reads EELEESQLMEVGMPDTELAAVDEER. Intrachain disulfides connect Cys51–Cys65, Cys55–Cys76, and Cys70–Cys81.

The protein belongs to the neurotoxin 12 (Hwtx-2) family. 02 (Hwtx-2) subfamily. As to expression, expressed by the venom gland.

It localises to the secreted. Its function is as follows. Postsynaptic neurotoxin. This Cyriopagopus hainanus (Chinese bird spider) protein is U4-theraphotoxin-Hhn1a.